We begin with the raw amino-acid sequence, 391 residues long: Serpin B13 (391 aa).

The protein belongs to the serpin family. Ov-serpin subfamily. Skin specific.

The protein localises to the cytoplasm. Its function is as follows. May play a role in the proliferation or differentiation of keratinocytes. The protein is Serpin B13 (SERPINB13) of Homo sapiens (Human).